The primary structure comprises 303 residues: Esterase (303 aa).

The short motif at 79–81 (HGG) is the Involved in the stabilization of the negatively charged intermediate by the formation of the oxyanion hole element. Active-site residues include serine 149 and glutamate 244.

This sequence belongs to the 'GDXG' lipolytic enzyme family.

It is found in the secreted. In Acinetobacter venetianus (strain ATCC 31012 / DSM 23050 / BCRC 14357 / CCUG 45561 / CIP 110063 / KCTC 2702 / LMG 19082 / RAG-1), this protein is Esterase (est).